Reading from the N-terminus, the 402-residue chain is Subtilisin-like protease 9 (402 aa).

Positions 1–20 are cleaved as a signal peptide; it reads MGFFRQLFSLSLCALSLAIP. Positions 21–120 are excised as a propeptide; that stretch reads SKLIGLENTQ…VEVDRVVKLD (100 aa). The 84-residue stretch at 36–119 folds into the Inhibitor I9 domain; the sequence is SYIVVMKSTI…YVEVDRVVKL (84 aa). The 273-residue stretch at 130 to 402 folds into the Peptidase S8 domain; sequence SWGLGRISHK…RKLLYNGSGA (273 aa). Active-site charge relay system residues include Asp162 and His193. An N-linked (GlcNAc...) asparagine glycan is attached at Asn254. The active-site Charge relay system is Ser348. Asn390 and Asn398 each carry an N-linked (GlcNAc...) asparagine glycan.

Belongs to the peptidase S8 family.

The protein localises to the secreted. Secreted subtilisin-like serine protease with keratinolytic activity that contributes to pathogenicity. This Arthroderma benhamiae (strain ATCC MYA-4681 / CBS 112371) (Trichophyton mentagrophytes) protein is Subtilisin-like protease 9 (SUB9).